Reading from the N-terminus, the 336-residue chain is DNA-directed RNA polymerase subunit alpha (336 aa).

Residues 1–226 form an alpha N-terminal domain (alpha-NTD) region; sequence MLIAQRPTLS…ELFGLARELN (226 aa). The alpha C-terminal domain (alpha-CTD) stretch occupies residues 241–336; it reads AALAADMALP…DDAAFSDDEL (96 aa).

This sequence belongs to the RNA polymerase alpha chain family. As to quaternary structure, homodimer. The RNAP catalytic core consists of 2 alpha, 1 beta, 1 beta' and 1 omega subunit. When a sigma factor is associated with the core the holoenzyme is formed, which can initiate transcription.

It catalyses the reaction RNA(n) + a ribonucleoside 5'-triphosphate = RNA(n+1) + diphosphate. In terms of biological role, DNA-dependent RNA polymerase catalyzes the transcription of DNA into RNA using the four ribonucleoside triphosphates as substrates. The protein is DNA-directed RNA polymerase subunit alpha of Arthrobacter sp. (strain FB24).